We begin with the raw amino-acid sequence, 618 residues long: Sodium-coupled monocarboxylate transporter 2 (618 aa).

The Extracellular portion of the chain corresponds to 1-9 (MEVKNFAVW). A helical transmembrane segment spans residues 10–30 (DYVVFAALFFISSGIGVFFAI). Residues 31-47 (KERKKATSREFLVGGRQ) lie on the Cytoplasmic side of the membrane. The helical transmembrane segment at 48–68 (MSFGPVGLSLTASFMSAVTVL) threads the bilayer. The Extracellular portion of the chain corresponds to 69–82 (GTPSEVYRFGASFL). Residues 83–103 (VFFIAYLFVILLTSELFLPVF) traverse the membrane as a helical segment. Topologically, residues 104-128 (YRSGITSTYEYLQLRFNKPVRYAAT) are cytoplasmic. Residues 129 to 149 (VIYIVQTILYTGVVVYAPALA) form a helical membrane-spanning segment. The Extracellular portion of the chain corresponds to 150–157 (LNQVTGFD). Residues 158–178 (LWGSVFATGIVCTFYCTLGGL) form a helical membrane-spanning segment. The Cytoplasmic segment spans residues 179–180 (KA). The chain crosses the membrane as a helical span at residues 181–201 (VVWTDAFQMVVMIVGFLTVLI). The Extracellular segment spans residues 202–235 (QGSTHAGGFHNVLEQSTNGSRLHIFDFDVDPLRR). Residues 236–256 (HTFWTITVGGTFTWLGIYGVN) traverse the membrane as a helical segment. Over 257–275 (QSTIQRCISCKTEKHAKLA) the chain is Cytoplasmic. The chain crosses the membrane as a helical span at residues 276 to 296 (LYFNLLGLWIILVCAVFSGLI). Residues 297–321 (MYSHFKDCDPWTSGIISAPDQLMPY) lie on the Extracellular side of the membrane. The helical transmembrane segment at 322-342 (FVMEIFATMPGLPGLFVACAF) threads the bilayer. Residues 343–385 (SGTLSTVASSINALATVTFEDFVKSCFPHLSDKLSTWISKGLC) are Cytoplasmic-facing. A helical membrane pass occupies residues 386 to 406 (LLFGVMCTSMAVAASVMGGVV). Residues 407 to 411 (QASLS) are Extracellular-facing. The chain crosses the membrane as a helical span at residues 412–432 (IHGMCGGPMLGLFSLGIVFPF). Residues 433–437 (VNWKG) are Cytoplasmic-facing. The chain crosses the membrane as a helical span at residues 438–458 (ALGGLLTGITLSFWVAIGAFI). The Extracellular segment spans residues 459 to 504 (YPAPASKTWPLPLSTDQCIKSNVTATGPPVLSSRPGIADTWYSISY). N-linked (GlcNAc...) asparagine glycosylation is present at asparagine 480. A helical membrane pass occupies residues 505 to 525 (LYYSAVGCLGCIVAGVIISLI). The Cytoplasmic portion of the chain corresponds to 526–618 (TGRQRGEDIQ…NNMAFETTHF (93 aa)).

Belongs to the sodium:solute symporter (SSF) (TC 2.A.21) family.

The protein resides in the apical cell membrane. It catalyses the reaction (S)-lactate(out) + Na(+)(out) = (S)-lactate(in) + Na(+)(in). The enzyme catalyses nicotinate(out) + Na(+)(out) = nicotinate(in) + Na(+)(in). It carries out the reaction pyruvate(out) + Na(+)(out) = pyruvate(in) + Na(+)(in). The catalysed reaction is propanoate(out) + Na(+)(out) = propanoate(in) + Na(+)(in). It catalyses the reaction butanoate(out) + Na(+)(out) = butanoate(in) + Na(+)(in). The enzyme catalyses acetoacetate(out) + Na(+)(out) = acetoacetate(in) + Na(+)(in). Its activity is regulated as follows. Cotransport of monocarboxylates and nicotinate strongly inhibited by ibuprofen, fenoprofen and ketoprofen. Its function is as follows. Acts as an electroneutral and low-affinity sodium (Na(+))-dependent sodium-coupled solute transporter. Catalyzes the transport across the plasma membrane of many monocarboxylates such as lactate, pyruvate, nicotinate, propionate, butyrate and beta-D-hydroxybutyrate. May be responsible for the first step of reabsorption of monocarboxylates from the lumen of the proximal tubule of the kidney and the small intestine. May play also a role in monocarboxylates transport in the retina. The sequence is that of Sodium-coupled monocarboxylate transporter 2 from Homo sapiens (Human).